The sequence spans 358 residues: PqqA peptide cyclase (358 aa).

The Radical SAM core domain maps to 4-219 (PSPPMSLLAE…VEAERAKGGL (216 aa)). [4Fe-4S] cluster is bound by residues Cys18, Cys22, and Cys25.

The protein belongs to the radical SAM superfamily. PqqE family. As to quaternary structure, interacts with PqqD. The interaction is necessary for activity of PqqE. Requires [4Fe-4S] cluster as cofactor.

The catalysed reaction is [PQQ precursor protein] + S-adenosyl-L-methionine = E-Y cross-linked-[PQQ precursor protein] + 5'-deoxyadenosine + L-methionine + H(+). It functions in the pathway cofactor biosynthesis; pyrroloquinoline quinone biosynthesis. Catalyzes the cross-linking of a glutamate residue and a tyrosine residue in the PqqA protein as part of the biosynthesis of pyrroloquinoline quinone (PQQ). In Gluconobacter oxydans (strain 621H) (Gluconobacter suboxydans), this protein is PqqA peptide cyclase.